A 1146-amino-acid polypeptide reads, in one-letter code: DNA polymerase II large subunit (1146 aa).

Belongs to the archaeal DNA polymerase II family. As to quaternary structure, heterodimer of a large subunit and a small subunit.

The catalysed reaction is DNA(n) + a 2'-deoxyribonucleoside 5'-triphosphate = DNA(n+1) + diphosphate. It carries out the reaction Exonucleolytic cleavage in the 3'- to 5'-direction to yield nucleoside 5'-phosphates.. Its function is as follows. Possesses two activities: a DNA synthesis (polymerase) and an exonucleolytic activity that degrades single-stranded DNA in the 3'- to 5'-direction. Has a template-primer preference which is characteristic of a replicative DNA polymerase. This chain is DNA polymerase II large subunit, found in Methanosarcina barkeri (strain Fusaro / DSM 804).